A 157-amino-acid chain; its full sequence is Large ribosomal subunit protein uL22 (157 aa).

Belongs to the universal ribosomal protein uL22 family. As to quaternary structure, part of the 50S ribosomal subunit.

In terms of biological role, this protein binds specifically to 23S rRNA. It makes multiple contacts with different domains of the 23S rRNA in the assembled 50S subunit and ribosome. Its function is as follows. The globular domain of the protein is located near the polypeptide exit tunnel on the outside of the subunit, while an extended beta-hairpin is found that lines the wall of the exit tunnel in the center of the 70S ribosome. The protein is Large ribosomal subunit protein uL22 of Methanocorpusculum labreanum (strain ATCC 43576 / DSM 4855 / Z).